Consider the following 430-residue polypeptide: tRNA(Ile)-lysidine synthase (430 aa).

24-29 contributes to the ATP binding site; the sequence is SGGLDS.

It belongs to the tRNA(Ile)-lysidine synthase family.

The protein localises to the cytoplasm. The catalysed reaction is cytidine(34) in tRNA(Ile2) + L-lysine + ATP = lysidine(34) in tRNA(Ile2) + AMP + diphosphate + H(+). In terms of biological role, ligates lysine onto the cytidine present at position 34 of the AUA codon-specific tRNA(Ile) that contains the anticodon CAU, in an ATP-dependent manner. Cytidine is converted to lysidine, thus changing the amino acid specificity of the tRNA from methionine to isoleucine. The sequence is that of tRNA(Ile)-lysidine synthase from Haemophilus influenzae (strain PittGG).